A 272-amino-acid chain; its full sequence is Insertion element IS600 uncharacterized 31 kDa protein (272 aa).

An Integrase catalytic domain is found at 105–268; the sequence is APTAPNQVWV…SPAAFREKYH (164 aa).

The chain is Insertion element IS600 uncharacterized 31 kDa protein from Shigella sonnei.